The following is a 57-amino-acid chain: uncharacterized protein (57 aa).

Residues 1–57 are disordered; that stretch reads MITPIGKNSNSNSNSNSNSNSNSNSNSNSNSNSNSNSNSNSNSNSNSNSNSNSNSNN. The segment covering 8 to 57 has biased composition (low complexity); that stretch reads NSNSNSNSNSNSNSNSNSNSNSNSNSNSNSNSNSNSNSNSNSNSNSNSNN.

This is an uncharacterized protein from Dictyostelium discoideum (Social amoeba).